The primary structure comprises 224 residues: Urease accessory protein UreF (224 aa).

The protein belongs to the UreF family. In terms of assembly, ureD, UreF and UreG form a complex that acts as a GTP-hydrolysis-dependent molecular chaperone, activating the urease apoprotein by helping to assemble the nickel containing metallocenter of UreC. The UreE protein probably delivers the nickel.

Its subcellular location is the cytoplasm. Functionally, required for maturation of urease via the functional incorporation of the urease nickel metallocenter. This is Urease accessory protein UreF from Pseudomonas fluorescens (strain SBW25).